Here is a 237-residue protein sequence, read N- to C-terminus: Class B acid phosphatase (237 aa).

A signal peptide spans 1–23 (MRKVTLTLSAIALALSLNGAAMA). Aspartate 69 acts as the Nucleophile in catalysis. Aspartate 69 and aspartate 71 together coordinate Mg(2+). Aspartate 71 acts as the Proton donor in catalysis. Substrate-binding positions include 137-138 (TG) and lysine 177. Residue aspartate 192 participates in Mg(2+) binding.

Belongs to the class B bacterial acid phosphatase family. Homotetramer. Mg(2+) serves as cofactor.

It localises to the periplasm. The enzyme catalyses a phosphate monoester + H2O = an alcohol + phosphate. Dephosphorylates several organic phosphate monoesters. Also has a phosphotransferase activity catalyzing the transfer of low-energy phosphate groups from organic phosphate monoesters to free hydroxyl groups of various organic compounds. The chain is Class B acid phosphatase from Proteus mirabilis (strain HI4320).